The primary structure comprises 448 residues: tRNA(Ile)-lysidine synthase (448 aa).

28 to 33 (STGVDS) contributes to the ATP binding site.

Belongs to the tRNA(Ile)-lysidine synthase family.

The protein localises to the cytoplasm. It catalyses the reaction cytidine(34) in tRNA(Ile2) + L-lysine + ATP = lysidine(34) in tRNA(Ile2) + AMP + diphosphate + H(+). Functionally, ligates lysine onto the cytidine present at position 34 of the AUA codon-specific tRNA(Ile) that contains the anticodon CAU, in an ATP-dependent manner. Cytidine is converted to lysidine, thus changing the amino acid specificity of the tRNA from methionine to isoleucine. In Lactiplantibacillus plantarum (strain ATCC BAA-793 / NCIMB 8826 / WCFS1) (Lactobacillus plantarum), this protein is tRNA(Ile)-lysidine synthase.